The following is a 154-amino-acid chain: Ribonuclease H (154 aa).

One can recognise an RNase H type-1 domain in the interval 1 to 142 (MTKHVEIFTD…CDELARTAAE (142 aa)). Mg(2+) contacts are provided by Asp10, Glu48, Asp70, and Asp134.

Belongs to the RNase H family. In terms of assembly, monomer. Mg(2+) serves as cofactor.

It localises to the cytoplasm. It catalyses the reaction Endonucleolytic cleavage to 5'-phosphomonoester.. Endonuclease that specifically degrades the RNA of RNA-DNA hybrids. This Vibrio campbellii (strain ATCC BAA-1116) protein is Ribonuclease H.